Reading from the N-terminus, the 127-residue chain is Prophage antitermination protein Q homolog QuuD (127 aa).

This sequence belongs to the phage antitermination Q type 1 family.

Functionally, positively regulate expression of some phage genes. Bacterial host RNA polymerase modified by antitermination proteins transcribes through termination sites that otherwise prevent expression of the regulated genes. The protein is Prophage antitermination protein Q homolog QuuD (quuD) of Escherichia coli (strain K12).